The primary structure comprises 247 residues: 3-deoxy-manno-octulosonate cytidylyltransferase (247 aa).

Belongs to the KdsB family.

The protein resides in the cytoplasm. It carries out the reaction 3-deoxy-alpha-D-manno-oct-2-ulosonate + CTP = CMP-3-deoxy-beta-D-manno-octulosonate + diphosphate. It functions in the pathway nucleotide-sugar biosynthesis; CMP-3-deoxy-D-manno-octulosonate biosynthesis; CMP-3-deoxy-D-manno-octulosonate from 3-deoxy-D-manno-octulosonate and CTP: step 1/1. It participates in bacterial outer membrane biogenesis; lipopolysaccharide biosynthesis. In terms of biological role, activates KDO (a required 8-carbon sugar) for incorporation into bacterial lipopolysaccharide in Gram-negative bacteria. In Methylobacterium sp. (strain 4-46), this protein is 3-deoxy-manno-octulosonate cytidylyltransferase.